The chain runs to 359 residues: Fructose-bisphosphate aldolase class 2 (359 aa).

Residue serine 50 participates in D-glyceraldehyde 3-phosphate binding. Catalysis depends on aspartate 83, which acts as the Proton donor. Residues histidine 84, aspartate 105, glutamate 142, and histidine 198 each contribute to the Zn(2+) site. Residue glycine 199 participates in dihydroxyacetone phosphate binding. Histidine 232 lines the Zn(2+) pocket. Dihydroxyacetone phosphate-binding positions include 233-235 and 275-278; these read GSS and NIDT.

The protein belongs to the class II fructose-bisphosphate aldolase family. Requires Zn(2+) as cofactor.

It catalyses the reaction beta-D-fructose 1,6-bisphosphate = D-glyceraldehyde 3-phosphate + dihydroxyacetone phosphate. Its pathway is carbohydrate degradation; glycolysis; D-glyceraldehyde 3-phosphate and glycerone phosphate from D-glucose: step 4/4. Catalyzes the aldol condensation of dihydroxyacetone phosphate (DHAP or glycerone-phosphate) with glyceraldehyde 3-phosphate (G3P) to form fructose 1,6-bisphosphate (FBP) in gluconeogenesis and the reverse reaction in glycolysis. In Synechocystis sp. (strain ATCC 27184 / PCC 6803 / Kazusa), this protein is Fructose-bisphosphate aldolase class 2 (fbaA).